A 603-amino-acid polypeptide reads, in one-letter code: Conglutin beta 2 (603 aa).

The first 30 residues, 1 to 30 (MANMRVKFPTLVLLLGIVFLMAVSIGIAYG), serve as a signal peptide directing secretion. A compositionally biased stretch (basic and acidic residues) spans 36-105 (KNHERPQERE…REPSRGREQE (70 aa)). Disordered regions lie at residues 36 to 177 (KNHE…RNPY), 343 to 363 (DGQE…DQGV), and 375 to 399 (LRKH…LRSD). Residues 137–147 (QGSSSSSGRQS) show a composition bias toward low complexity. Basic and acidic residues predominate over residues 148 to 172 (GYERREQREEREQQQEQDSRSESRR). Residues 177–335 (YYFSYERFQT…TFNTRYEEIQ (159 aa)) form the Cupin type-1 1 domain. Over residues 381–393 (SSSGKGKPSESGP) the composition is skewed to low complexity. The region spanning 394 to 554 (FNLRSDEPIY…TFPGSVEDVE (161 aa)) is the Cupin type-1 2 domain. Asn504 carries N-linked (GlcNAc...) asparagine glycosylation. Residues 564-574 (YFANAQPQQQQ) show a composition bias toward low complexity. A disordered region spans residues 564–583 (YFANAQPQQQQQREKEGRRG).

It belongs to the 7S seed storage protein family. Component of globulins complexes which accumulate in seeds.

In terms of biological role, seed storage protein. Accumulates during seed development and is hydrolyzed after germination to provide a carbon and nitrogen source for the developing seedling. This chain is Conglutin beta 2, found in Lupinus angustifolius (Narrow-leaved blue lupine).